We begin with the raw amino-acid sequence, 346 residues long: NADH-ubiquinone oxidoreductase chain 2 (346 aa).

A run of 11 helical transmembrane segments spans residues 1–21 (MNPHATPVLVLSLALGTTITI), 25–45 (HWVLAWTGLEINTLAIIPLIS), 60–80 (FLTQAAASALVLFSSMTNAWA), 95–115 (CLLLTAAIAIKLGLVPFHFWF), 124–144 (LMTALLLSTLMKFPPLTLLLM), 149–169 (LNPALLTTMALASAALGGWMG), 178–195 (ILAFSSISHLGWIAIILV), 200–219 (LALLTFYLYAIMTSAVFMAL), 242–262 (ATLMLVLLSLAGLPPLTGFMP), 274–294 (EMTPAAMAIAMLSLLSLFFYL), and 326–346 (AILASLSILLLPLSPMIHAIV).

This sequence belongs to the complex I subunit 2 family.

It localises to the mitochondrion inner membrane. The catalysed reaction is a ubiquinone + NADH + 5 H(+)(in) = a ubiquinol + NAD(+) + 4 H(+)(out). Its function is as follows. Core subunit of the mitochondrial membrane respiratory chain NADH dehydrogenase (Complex I) that is believed to belong to the minimal assembly required for catalysis. Complex I functions in the transfer of electrons from NADH to the respiratory chain. The immediate electron acceptor for the enzyme is believed to be ubiquinone. This chain is NADH-ubiquinone oxidoreductase chain 2 (MT-ND2), found in Mareca falcata (Falcated duck).